The chain runs to 300 residues: Folate-binding protein 1 (300 aa).

The N-terminal stretch at 1–28 is a signal peptide; the sequence is MGRCLTKKVFLIQSPILFLHLLISLSSG. 5 cysteine pairs are disulfide-bonded: cysteine 38–cysteine 76, cysteine 68–cysteine 111, cysteine 77–cysteine 114, cysteine 102–cysteine 139, and cysteine 132–cysteine 178. Asparagine 173 carries an N-linked (GlcNAc...) asparagine glycan. A helical transmembrane segment spans residues 238 to 258; that stretch reads MTTIQKISLGMSFLIAGMFLI.

It belongs to the folate receptor family. As to expression, expressed in leaves.

It localises to the membrane. Functionally, folic acid-binding protein involved in salicylic acid- (SA-) induced folate accumulation by triggering uptake and accumulation of folic acid in cells. May be implicated in the transport of the folates from the site of production (leaves) to the site of storage (fruits and seeds) and utilization (roots). This chain is Folate-binding protein 1, found in Arabidopsis thaliana (Mouse-ear cress).